Here is a 351-residue protein sequence, read N- to C-terminus: Molybdenum import ATP-binding protein ModC (351 aa).

Residues Met1–Asp229 enclose the ABC transporter domain. Gly31–Thr38 lines the ATP pocket. In terms of domain architecture, Mop spans Lys289 to Leu351.

Belongs to the ABC transporter superfamily. Molybdate importer (TC 3.A.1.8) family. In terms of assembly, the complex is composed of two ATP-binding proteins (ModC), two transmembrane proteins (ModB) and a solute-binding protein (ModA).

It localises to the cell inner membrane. The enzyme catalyses molybdate(out) + ATP + H2O = molybdate(in) + ADP + phosphate + H(+). Part of the ABC transporter complex ModABC involved in molybdenum import. Responsible for energy coupling to the transport system. In Pasteurella multocida (strain Pm70), this protein is Molybdenum import ATP-binding protein ModC.